Consider the following 126-residue polypeptide: MPTINQLIRKPRSRLIVKSKSPALENSPQRRGVCTRVYTTTPKKPNSALRKVAKVRLTNGFEVISYIGGEGHNLQEHSVVLIRGGRVKDLPGVRYHIVRGSLDLQGVKDRKQSRSKYGAKRAKKAA.

Asp89 bears the 3-methylthioaspartic acid mark.

This sequence belongs to the universal ribosomal protein uS12 family. Part of the 30S ribosomal subunit. Contacts proteins S8 and S17. May interact with IF1 in the 30S initiation complex.

With S4 and S5 plays an important role in translational accuracy. In terms of biological role, interacts with and stabilizes bases of the 16S rRNA that are involved in tRNA selection in the A site and with the mRNA backbone. Located at the interface of the 30S and 50S subunits, it traverses the body of the 30S subunit contacting proteins on the other side and probably holding the rRNA structure together. The combined cluster of proteins S8, S12 and S17 appears to hold together the shoulder and platform of the 30S subunit. The protein is Small ribosomal subunit protein uS12 of Polynucleobacter asymbioticus (strain DSM 18221 / CIP 109841 / QLW-P1DMWA-1) (Polynucleobacter necessarius subsp. asymbioticus).